The following is a 362-amino-acid chain: sn-glycerol-3-phosphate import ATP-binding protein UgpC (362 aa).

Residues 4-235 form the ABC transporter domain; it reads LKLQAVTKSY…PATLFVASFI (232 aa). 37 to 44 is an ATP binding site; sequence GPSGCGKS.

The protein belongs to the ABC transporter superfamily. sn-glycerol-3-phosphate importer (TC 3.A.1.1.3) family. The complex is composed of two ATP-binding proteins (UgpC), two transmembrane proteins (UgpA and UgpE) and a solute-binding protein (UgpB).

The protein localises to the cell inner membrane. The enzyme catalyses sn-glycerol 3-phosphate(out) + ATP + H2O = sn-glycerol 3-phosphate(in) + ADP + phosphate + H(+). Part of the ABC transporter complex UgpBAEC involved in sn-glycerol-3-phosphate (G3P) import. Responsible for energy coupling to the transport system. This chain is sn-glycerol-3-phosphate import ATP-binding protein UgpC, found in Yersinia enterocolitica serotype O:8 / biotype 1B (strain NCTC 13174 / 8081).